The chain runs to 408 residues: Putative gustatory receptor 98c (408 aa).

Topologically, residues Met-1–Arg-42 are cytoplasmic. Residues Phe-43–Glu-63 traverse the membrane as a helical segment. Residues Phe-64–Lys-92 are Extracellular-facing. The chain crosses the membrane as a helical span at residues Phe-93–Leu-113. Residues Gly-114–Arg-146 lie on the Cytoplasmic side of the membrane. A helical membrane pass occupies residues Leu-147–Leu-167. Topologically, residues Gly-168 to Gln-183 are extracellular. The chain crosses the membrane as a helical span at residues Ile-184–Tyr-204. The Cytoplasmic portion of the chain corresponds to Glu-205 to Ser-261. The chain crosses the membrane as a helical span at residues Met-262–Ile-282. Over Arg-283–Leu-296 the chain is Extracellular. A helical transmembrane segment spans residues Gly-297–Val-317. Residues Lys-318–Asp-367 lie on the Cytoplasmic side of the membrane. A helical transmembrane segment spans residues Ile-368–Val-388. Over Gln-389–Ser-408 the chain is Extracellular. Asn-403 is a glycosylation site (N-linked (GlcNAc...) asparagine).

Belongs to the insect chemoreceptor superfamily. Gustatory receptor (GR) family. Gr2a subfamily.

Its subcellular location is the cell membrane. Probable gustatory receptor which mediates acceptance or avoidance behavior, depending on its substrates. This Drosophila melanogaster (Fruit fly) protein is Putative gustatory receptor 98c (Gr98c).